We begin with the raw amino-acid sequence, 233 residues long: Phytol kinase (233 aa).

The next 6 membrane-spanning stretches (helical) occupy residues 9–29, 56–76, 96–118, 122–144, 172–192, and 213–233; these read MALPLWIAVGLAATYLGAVVL, VVLIAWWLSIPGWVGAIAGVF, VGRHSYGTLFYALSIGLLVGGFF, LPIFAAIGILVMAWGDGLAALVG, FLVTVVFLSYTFGFTVIVLVV, and NLTVPLGSALIAWAGSYLWLG.

This sequence belongs to the polyprenol kinase family.

The protein localises to the cell membrane. The catalysed reaction is phytol + CTP = phytyl phosphate + CDP + H(+). The protein operates within cofactor biosynthesis; tocopherol biosynthesis. Catalyzes the CTP-dependent phosphorylation of phytol to phytylmonophosphate (PMP). Can also use UTP as an alternative phosphate donor, but not ATP or GTP. Is involved in tocopherol biosynthesis, via the utilization of phytol generated by chlorophyll degradation. Also plays a significant but not critical role in the recycling of phytol for the biosynthesis of new chlorophyll molecules. The sequence is that of Phytol kinase from Synechocystis sp. (strain ATCC 27184 / PCC 6803 / Kazusa).